A 765-amino-acid polypeptide reads, in one-letter code: Probable glycosyltransferase STELLO2 (765 aa).

At 1 to 43 the chain is on the cytoplasmic side; sequence MLVQDRVAPKPPKSRIRELPSRDRFAEPKILDFSSWVSDNVYR. The chain crosses the membrane as a helical span at residues 44 to 64; the sequence is IVIIFLFIVTVAAFFFLYNTT. Residues 65–765 lie on the Lumenal side of the membrane; the sequence is DTASLLCFQS…EGDPLLMELV (701 aa). N-linked (GlcNAc...) asparagine glycosylation is found at N235 and N723.

It belongs to the STELLO family. In terms of assembly, homo- and heterodimer with STL1. Interacts with CESA1, CESA3, CESA4, CESA6, CESA7 and CESA8, but not with GOT1. In terms of tissue distribution, expressed in cells that are expanding or producing secondary cell walls.

Its subcellular location is the golgi apparatus membrane. In terms of biological role, probable glycosyltransferase regulating the assembly and trafficking of cellulose synthase complexes. The polypeptide is Probable glycosyltransferase STELLO2 (Arabidopsis thaliana (Mouse-ear cress)).